The primary structure comprises 188 residues: Elongation factor P (188 aa).

The protein belongs to the elongation factor P family.

It is found in the cytoplasm. Its pathway is protein biosynthesis; polypeptide chain elongation. Its function is as follows. Involved in peptide bond synthesis. Stimulates efficient translation and peptide-bond synthesis on native or reconstituted 70S ribosomes in vitro. Probably functions indirectly by altering the affinity of the ribosome for aminoacyl-tRNA, thus increasing their reactivity as acceptors for peptidyl transferase. The polypeptide is Elongation factor P (Ralstonia nicotianae (strain ATCC BAA-1114 / GMI1000) (Ralstonia solanacearum)).